The following is a 460-amino-acid chain: 3-isopropylmalate dehydratase large subunit (460 aa).

Cysteine 338, cysteine 398, and cysteine 401 together coordinate [4Fe-4S] cluster.

Belongs to the aconitase/IPM isomerase family. LeuC type 1 subfamily. As to quaternary structure, heterodimer of LeuC and LeuD. Requires [4Fe-4S] cluster as cofactor.

The catalysed reaction is (2R,3S)-3-isopropylmalate = (2S)-2-isopropylmalate. It participates in amino-acid biosynthesis; L-leucine biosynthesis; L-leucine from 3-methyl-2-oxobutanoate: step 2/4. Its function is as follows. Catalyzes the isomerization between 2-isopropylmalate and 3-isopropylmalate, via the formation of 2-isopropylmaleate. This is 3-isopropylmalate dehydratase large subunit from Streptococcus sanguinis (strain SK36).